Reading from the N-terminus, the 491-residue chain is Cytochrome P450 monooxygenase 521A1 (491 aa).

The chain crosses the membrane as a helical span at residues 1–21; it reads MILLTLLYLIIFYIIIDFIKK. Cys-438 is a binding site for heme.

This sequence belongs to the cytochrome P450 family. Heme is required as a cofactor.

The protein localises to the membrane. It catalyses the reaction discoidol + reduced [NADPH--hemoprotein reductase] + O2 = discodiene + acetone + oxidized [NADPH--hemoprotein reductase] + 2 H2O + H(+). The protein operates within sesquiterpene biosynthesis. Its function is as follows. Cytochrome P450 monooxygenase; part of the gene cluster that mediates the biosynthesis of the trisnorsesquiterpene discodiene which has a function during later stages of multicellular development, during the transition from fingers to Mexican hats. The terpene synthase tps8 converts its substrate farnesyl diphosphate (FDP) into the bicyclic sesquiterpene alcohol discoidol. The cytochrome P450 monooxygenase cyp521A1 then catalyzes the oxidative degradation of discoidol to form the trisnorsesquiterpene discodiene. This is Cytochrome P450 monooxygenase 521A1 (cyp521A1) from Dictyostelium discoideum (Social amoeba).